The following is a 338-amino-acid chain: Aspartate-semialdehyde dehydrogenase (338 aa).

NADP(+)-binding positions include 13-16 and 41-42; these read TGNV and NS. Phosphate is bound at residue arginine 101. Cysteine 132 (acyl-thioester intermediate) is an active-site residue. Glutamine 159 is a binding site for substrate. 162–163 contacts NADP(+); sequence SG. Lysine 216 is a binding site for phosphate. Arginine 237 is a substrate binding site. Histidine 244 (proton acceptor) is an active-site residue. Asparagine 317 is an NADP(+) binding site.

This sequence belongs to the aspartate-semialdehyde dehydrogenase family. Homodimer.

The enzyme catalyses L-aspartate 4-semialdehyde + phosphate + NADP(+) = 4-phospho-L-aspartate + NADPH + H(+). Its pathway is amino-acid biosynthesis; L-lysine biosynthesis via DAP pathway; (S)-tetrahydrodipicolinate from L-aspartate: step 2/4. It participates in amino-acid biosynthesis; L-methionine biosynthesis via de novo pathway; L-homoserine from L-aspartate: step 2/3. It functions in the pathway amino-acid biosynthesis; L-threonine biosynthesis; L-threonine from L-aspartate: step 2/5. In terms of biological role, catalyzes the NADPH-dependent formation of L-aspartate-semialdehyde (L-ASA) by the reductive dephosphorylation of L-aspartyl-4-phosphate. The polypeptide is Aspartate-semialdehyde dehydrogenase (Rickettsia bellii (strain RML369-C)).